Consider the following 440-residue polypeptide: Protein CyaD (440 aa).

Topologically, residues 1-55 (MRRALRELAARHGRVLAASWRQRHRRPAGWFDPVETEFLPSALSLQERPISPTAR) are cytoplasmic. Residues 56–75 (WLARILMALAAGALVWSVVG) traverse the membrane as a helical segment. At 76 to 440 (KTEIVVHAAG…RHAGESLGER (365 aa)) the chain is on the periplasmic side.

It belongs to the membrane fusion protein (MFP) (TC 8.A.1) family.

The protein localises to the cell inner membrane. CyaD is necessary for transport of calmodulin-sensitive adenylate cyclase-hemolysin (cyclolysin). The sequence is that of Protein CyaD (cyaD) from Bordetella pertussis (strain ATCC 9797 / DSM 5571 / CCUG 30873 / LMG 14455 / NCTC 10739 / 18323).